The following is a 296-amino-acid chain: Protoheme IX farnesyltransferase (296 aa).

9 consecutive transmembrane segments (helical) span residues 9 to 29 (VTKP…FLLA), 36 to 56 (YPLF…GCVF), 75 to 95 (VLVK…VLGI), 99 to 119 (LLLY…GFVI), 133 to 153 (VYGT…GYCA), 163 to 183 (LILL…IAIF), 209 to 229 (ITLY…SGYA), 234 to 254 (LVVA…GYKA), and 265 to 285 (FVFS…DFNV).

It belongs to the UbiA prenyltransferase family. Protoheme IX farnesyltransferase subfamily.

It is found in the cell inner membrane. The enzyme catalyses heme b + (2E,6E)-farnesyl diphosphate + H2O = Fe(II)-heme o + diphosphate. It functions in the pathway porphyrin-containing compound metabolism; heme O biosynthesis; heme O from protoheme: step 1/1. Its function is as follows. Converts heme B (protoheme IX) to heme O by substitution of the vinyl group on carbon 2 of heme B porphyrin ring with a hydroxyethyl farnesyl side group. The sequence is that of Protoheme IX farnesyltransferase from Yersinia pestis bv. Antiqua (strain Antiqua).